Here is a 185-residue protein sequence, read N- to C-terminus: Peptidyl-tRNA hydrolase (185 aa).

Position 14 (Tyr-14) interacts with tRNA. His-19 functions as the Proton acceptor in the catalytic mechanism. TRNA-binding residues include Tyr-65, Asn-67, and Asn-113.

The protein belongs to the PTH family. As to quaternary structure, monomer.

Its subcellular location is the cytoplasm. The catalysed reaction is an N-acyl-L-alpha-aminoacyl-tRNA + H2O = an N-acyl-L-amino acid + a tRNA + H(+). Its function is as follows. Hydrolyzes ribosome-free peptidyl-tRNAs (with 1 or more amino acids incorporated), which drop off the ribosome during protein synthesis, or as a result of ribosome stalling. In terms of biological role, catalyzes the release of premature peptidyl moieties from peptidyl-tRNA molecules trapped in stalled 50S ribosomal subunits, and thus maintains levels of free tRNAs and 50S ribosomes. The polypeptide is Peptidyl-tRNA hydrolase (Rickettsia conorii (strain ATCC VR-613 / Malish 7)).